The following is a 298-amino-acid chain: tRNA-uridine aminocarboxypropyltransferase 2 (298 aa).

N-acetylmethionine is present on Met-1. The span at 1–10 (MEPQAEERTL) shows a compositional bias: basic and acidic residues. Residues 1–55 (MEPQAEERTLGEPAPPPSGALASPTPDEEERTEGGAPPTATPAGASGDSTSADGL) are disordered. A compositionally biased stretch (low complexity) spans 34-45 (GGAPPTATPAGA). Ser-132 is modified (phosphoserine). Residues 178–181 (DGTW) carry the DXTW motif.

This sequence belongs to the TDD superfamily. DTWD2 family.

The protein localises to the nucleus. The protein resides in the cytoplasm. It catalyses the reaction a uridine in tRNA + S-adenosyl-L-methionine = a 3-[(3S)-3-amino-3-carboxypropyl]uridine in tRNA + S-methyl-5'-thioadenosine + H(+). Catalyzes the formation of 3-(3-amino-3-carboxypropyl)uridine (acp3U) at position 20a in the D-loop of several cytoplasmic tRNAs (acp3U(20a)). Also has a weak activity to form acp3U at position 20 in the D-loop of tRNAs (acp3U(20)). Involved in glycoRNA biosynthesis by mediating formation of acp3U, which acts as an attachment site for N-glycans on tRNAs. GlycoRNAs consist of RNAs modified with secretory N-glycans that are presented on the cell surface. This Mus musculus (Mouse) protein is tRNA-uridine aminocarboxypropyltransferase 2.